The sequence spans 316 residues: Formimidoylglutamase (316 aa).

The Mn(2+) site is built by H127, D156, H158, D160, D247, and D249.

Belongs to the arginase family. It depends on Mn(2+) as a cofactor.

It catalyses the reaction N-formimidoyl-L-glutamate + H2O = formamide + L-glutamate. The protein operates within amino-acid degradation; L-histidine degradation into L-glutamate; L-glutamate from N-formimidoyl-L-glutamate (hydrolase route): step 1/1. Catalyzes the conversion of N-formimidoyl-L-glutamate to L-glutamate and formamide. This chain is Formimidoylglutamase, found in Cupriavidus pinatubonensis (strain JMP 134 / LMG 1197) (Cupriavidus necator (strain JMP 134)).